A 130-amino-acid chain; its full sequence is Small ribosomal subunit protein uS11 (130 aa).

Belongs to the universal ribosomal protein uS11 family. In terms of assembly, part of the 30S ribosomal subunit. Interacts with proteins S7 and S18. Binds to IF-3.

Located on the platform of the 30S subunit, it bridges several disparate RNA helices of the 16S rRNA. Forms part of the Shine-Dalgarno cleft in the 70S ribosome. The sequence is that of Small ribosomal subunit protein uS11 from Campylobacter fetus subsp. fetus (strain 82-40).